We begin with the raw amino-acid sequence, 318 residues long: Ankyrin repeat domain-containing protein 1 (318 aa).

Residues 37 to 77 (ALEKQEDLKTTSKSLIELEEEKQSKEKQLKSELLKKKLEER) adopt a coiled-coil conformation. 5 ANK repeats span residues 151–180 (YKRT…NIEF), 184–213 (LEST…AINA), 217–246 (LLST…DLNA), 250–279 (EGDT…NLNI), and 283–314 (AGKT…KNSH).

It is found in the nucleus. In terms of biological role, may act as a nuclear transcription factor that negatively regulates the expression of cardiac genes. In Xenopus laevis (African clawed frog), this protein is Ankyrin repeat domain-containing protein 1 (ankrd1).